The following is a 1484-amino-acid chain: MIERGKFRSLTLINWNGFFARTFDLDELVTTLSGGNGAGKSTTMAAFVTALIPDLTLLHFRNTTEAGATSGSRDKGLHGKLKAGVCYSMLDTINSRHQRVVVGVRLQQVAGRDRKVDIKPFAIQGLPMSVQPTQLVTETLNERQARVLSLAELKDKLDEMEGVQFKQFNSITDYHSLMFDLGIIARRLRSASDRSKFYRLIEASLYGGISSAITRSLRDYLLPENSGVRKAFQDMEAALRENRLTLEAIRVTQSDRDLFKHLISEATDYVAADYMRHTNERRVHLDQALAFRRELYTSRKQLAAEQYKHVDMARELGEHNGAEGSLEADYQAASDHLNLVQTALRQQEKIERYEADLEELQIRLEEQNEVVAEAAEMQDENEARAEAAELEVDELKSQLADYQQALDVQQTRAIQYNQAISALARAKELCHLPDLTPESAAEWLDTFQAKEQEATEKLLSLEQKMSVAQTAHSQFEQAYQLVAAINGPLARSEAWDVARELLRDGVNQRHLAEQVQPLRMRLSELEQRLREQQEAERLLAEFCKRQGKNFDIDELEALHQELEARIASLSESVSSASEQRMALRQEQEQLQSRIQHLMQRAPVWLAAQNSLNQLSEQCGEEFTSSQEVTEYLQQLLEREREAIVERDEVGARKNAVDEEIERLSQPGGAEDQRLNALAERFGGVLLSEIYDDVSLEDAPYFSALYGPSRHAIVVPDLSQIAEQLEGLTDCPEDLYLIEGDPQSFDDSVFSVDELEKAVVVKIADRQWRYSRFPSLPIFGRAARENRIESLHAEREVLSERFATLSFDVQKTQRLHQAFSRFIGSHLSVAFEDDPEAEIRRLNGRRVELERALATHESDNQQQRLQFEQAKEGVSALNRLLPRLNLLADETLADRVDEIQERLDEAQEAARFVQQYGNQLAKLEPVVSVLQSDPEQFEQLKEDYAWSQQMQRDARQQAFALAEVVERRAHFSYSDSAEMLSGNSDLNEKLRQRLEQAEAERTRAREALRSHAAQLSQYSQVLASLKSSYDTKKELLNDLQRELQDIGVRADSGAEERARQRRDELHAQLSNNRSRRNQLEKALTFCEAEMENLTRKLRKLERDYHEMREQVVTAKAGWCAVMRMVKDNGVERRLHRRELAYLSADELRSMSDKALGALRLAVADNEHLRDVLRLSEDPKRPERKIQFFVAVYQHLRERIRQDIIRTDDPVEAIEQMEIELSRLTEELTSREQKLAISSRSVANIIRKTIQREQNRIRMLNQGLQSVSFGQVNSVRLNVNVRETHATLLDVLSEQQEQHQDLFNSNRLTFSEALAKLYQRLNPQIDMGQRTPQTIGEELLDYRNYLEMEVEVNRGSDGWLRAESGALSTGEAIGTGMSILVMVVQSWEDEARRLRGKDISPCRLLFLDEAARLDARSIATLFELCERLQMQLIIAAPENISPEKGTTYKLVRKVFQNTEHVHVVGLRGFAPQLPGTQTEDTPSEAS.

ATP is bound at residue 34-41; it reads GGNGAGKS. 3 coiled-coil regions span residues 326–418, 444–472, and 509–602; these read LEAD…QYNQ, LDTFQAKEQEATEKLLSLEQKMSVAQTAH, and RHLA…QRAP. Residues 666–783 form a flexible hinge region; sequence PGGAEDQRLN…SLPIFGRAAR (118 aa). 3 coiled-coil regions span residues 835–923, 977–1116, and 1209–1265; these read EAEI…AKLE, EMLS…AKAG, and VEAI…LQSV. The interval 1049-1074 is disordered; sequence ADSGAEERARQRRDELHAQLSNNRSR. Over residues 1051–1065 the composition is skewed to basic and acidic residues; it reads SGAEERARQRRDELH.

It belongs to the SMC family. MukB subfamily. In terms of assembly, homodimerization via its hinge domain. Binds to DNA via its C-terminal region. Interacts, and probably forms a ternary complex, with MukE and MukF via its C-terminal region. The complex formation is stimulated by calcium or magnesium. Interacts with tubulin-related protein FtsZ.

The protein localises to the cytoplasm. Its subcellular location is the nucleoid. Its function is as follows. Plays a central role in chromosome condensation, segregation and cell cycle progression. Functions as a homodimer, which is essential for chromosome partition. Involved in negative DNA supercoiling in vivo, and by this means organize and compact chromosomes. May achieve or facilitate chromosome segregation by condensation DNA from both sides of a centrally located replisome during cell division. This is Chromosome partition protein MukB from Salmonella dublin (strain CT_02021853).